Consider the following 59-residue polypeptide: Large ribosomal subunit protein bL32 (59 aa).

It belongs to the bacterial ribosomal protein bL32 family.

The polypeptide is Large ribosomal subunit protein bL32 (Mycoplasma capricolum subsp. capricolum (strain California kid / ATCC 27343 / NCTC 10154)).